The sequence spans 212 residues: MSIGGVYELAFCRSSLKSKKYFIILLALAAIAGLGTHAAWSSNGLPRIDNKTLARLAQQHPVVVLFRHAERCDRSTNQCLSDKTGITVKGTQDARELGNAFSADIPDFDLYSSNTVRTIQSATWFSAGKKLTVDKRLLQCGNEIYSAIKDLQSKAPDKNIVIFTHNHCLTYIAKNKRDATFKPDYLDGLVMHVEKGKVYLDGEFGNAANLLI.

An N-terminal signal peptide occupies residues 1-32 (MSIGGVYELAFCRSSLKSKKYFIILLALAAIA).

Belongs to the phosphoglycerate mutase family. Ais subfamily.

Its subcellular location is the periplasm. Its pathway is bacterial outer membrane biogenesis; lipopolysaccharide metabolism. Catalyzes the dephosphorylation of heptose(II) of the outer membrane lipopolysaccharide core. The protein is Lipopolysaccharide core heptose(II)-phosphate phosphatase of Shigella boydii serotype 4 (strain Sb227).